Reading from the N-terminus, the 267-residue chain is 3-methyl-2-oxobutanoate hydroxymethyltransferase (267 aa).

2 residues coordinate Mg(2+): Asp-46 and Asp-85. 3-methyl-2-oxobutanoate-binding positions include 46-47 (DS), Asp-85, and Lys-115. Glu-117 contributes to the Mg(2+) binding site. The active-site Proton acceptor is Glu-184.

It belongs to the PanB family. In terms of assembly, homodecamer; pentamer of dimers. Requires Mg(2+) as cofactor.

Its subcellular location is the cytoplasm. The catalysed reaction is 3-methyl-2-oxobutanoate + (6R)-5,10-methylene-5,6,7,8-tetrahydrofolate + H2O = 2-dehydropantoate + (6S)-5,6,7,8-tetrahydrofolate. It functions in the pathway cofactor biosynthesis; (R)-pantothenate biosynthesis; (R)-pantoate from 3-methyl-2-oxobutanoate: step 1/2. In terms of biological role, catalyzes the reversible reaction in which hydroxymethyl group from 5,10-methylenetetrahydrofolate is transferred onto alpha-ketoisovalerate to form ketopantoate. The protein is 3-methyl-2-oxobutanoate hydroxymethyltransferase of Geobacter sulfurreducens (strain ATCC 51573 / DSM 12127 / PCA).